We begin with the raw amino-acid sequence, 274 residues long: Large ribosomal subunit protein uL2c (274 aa).

A disordered region spans residues 230–252; sequence HPHGGGEGRSPIGRSKPLTPWGK.

Belongs to the universal ribosomal protein uL2 family. Part of the 50S ribosomal subunit.

The protein resides in the plastid. This Euglena longa (Euglenophycean alga) protein is Large ribosomal subunit protein uL2c (rpl2).